A 408-amino-acid chain; its full sequence is Glutathione-independent formaldehyde dehydrogenase (408 aa).

Residue Cys61 participates in Zn(2+) binding. NAD(+)-binding residues include Gly62, Ser63, and His66. Zn(2+)-binding residues include His82, Cys112, Cys115, Cys118, Cys126, and Asp184. The NAD(+) site is built by Val212, Asp232, Arg237, Val277, His284, Pro311, Leu313, Gly348, and Thr350.

This sequence belongs to the zinc-containing alcohol dehydrogenase family. The cofactor is Zn(2+).

The catalysed reaction is formaldehyde + NAD(+) + H2O = formate + NADH + 2 H(+). With respect to regulation, activity is not inhibited by EDTA, which is probably not sufficient to displace the bound metal. Its function is as follows. Dehydrogenase that catalyzes the NAD(+)-dependent oxidation of formaldehyde. Exhibits lower activity with acetaldehyde (about 10-fold lower than for formaldehyde), but cannot use methanol, ethanol, 1-butanol, glyoxal or formic acid. Is involved in formaldehyde detoxification. In Bacillus subtilis (strain 168), this protein is Glutathione-independent formaldehyde dehydrogenase.